Reading from the N-terminus, the 242-residue chain is ATP synthase subunit 4, mitochondrial (242 aa).

Residues 1–35 (MSFRALTMRSAVARTALNNTIRSARVATPYLGIRH) constitute a mitochondrion transit peptide.

This sequence belongs to the eukaryotic ATPase B chain family. F-type ATPases have 2 components, CF(1) - the catalytic core - and CF(0) - the membrane proton channel. In yeast, the dimeric form of ATP synthase consists of 17 polypeptides: alpha, beta, gamma, delta, epsilon, 4 (B), 5 (OSCP), 6 (A), 8, 9 (C), d, E (Tim11), f, g, h, i/j and k.

It is found in the mitochondrion. It localises to the mitochondrion inner membrane. Its function is as follows. Mitochondrial membrane ATP synthase (F(1)F(0) ATP synthase or Complex V) produces ATP from ADP in the presence of a proton gradient across the membrane which is generated by electron transport complexes of the respiratory chain. F-type ATPases consist of two structural domains, F(1) - containing the extramembraneous catalytic core, and F(0) - containing the membrane proton channel, linked together by a central stalk and a peripheral stalk. During catalysis, ATP synthesis in the catalytic domain of F(1) is coupled via a rotary mechanism of the central stalk subunits to proton translocation. Part of the complex F(0) domain and the peripheric stalk, which acts as a stator to hold the catalytic alpha(3)beta(3) subcomplex and subunit a/ATP6 static relative to the rotary elements. This chain is ATP synthase subunit 4, mitochondrial (ATP4), found in Candida glabrata (strain ATCC 2001 / BCRC 20586 / JCM 3761 / NBRC 0622 / NRRL Y-65 / CBS 138) (Yeast).